A 596-amino-acid polypeptide reads, in one-letter code: Actin-histidine N-methyltransferase (596 aa).

Residues 1–22 (MGKKSRVKTQKSGTGATATVSP) form a disordered region. The segment covering 10–20 (QKSGTGATATV) has biased composition (polar residues). S-adenosyl-L-methionine-binding positions include Arg75, 104–106 (EGF), Arg254, 275–279 (DMCNH), and 325–327 (SGF). An SET domain is found at 94-314 (EGFEMVNFKE…AGDQIYIFYG (221 aa)). The interval 551–596 (GLVNGESLIPNGTRSENESLSPEESENTTGDTEESSGSMDAVKERL) is disordered. A compositionally biased stretch (acidic residues) spans 571-584 (SPEESENTTGDTEE).

Belongs to the class V-like SAM-binding methyltransferase superfamily. SETD3 actin-histidine methyltransferase family. In terms of assembly, interacts with MYOD1. Phosphorylated by GSK3B, which is required for recognition by the SCF(FBXW7) complex and subsequent degradation. In terms of processing, ubiquitinated by the SCF(FBXW7) complex following phosphorylation by GSK3B, leading to its degradation by the proteasome.

Its subcellular location is the cytoplasm. It is found in the nucleus. It carries out the reaction L-histidyl-[protein] + S-adenosyl-L-methionine = N(tele)-methyl-L-histidyl-[protein] + S-adenosyl-L-homocysteine + H(+). Functionally, protein-histidine N-methyltransferase that specifically mediates 3-methylhistidine (tele-methylhistidine) methylation of actin at 'His-73'. Histidine methylation of actin is required for smooth muscle contraction of the laboring uterus during delivery. Does not have protein-lysine N-methyltransferase activity and probably only catalyzes histidine methylation of actin. The protein is Actin-histidine N-methyltransferase of Rattus norvegicus (Rat).